The primary structure comprises 106 residues: Neisseria hypothetical transcription factor (106 aa).

The 55-residue stretch at 26 to 80 (MRLFRVNKGWSQEELARQCGLDRTYVSAVERKRWNIALSNIEKMAAALGVAAYQL) folds into the HTH cro/C1-type domain. The H-T-H motif DNA-binding region spans 37–56 (QEELARQCGLDRTYVSAVER).

Homodimer. Can interact with the dimeric form of the DNA mimic protein DMP19 with 1:1 stoichiometry.

It is found in the cytoplasm. Its activity is regulated as follows. Repressor activity is inhibited in the presence of the DNA mimic protein DMP19, which interacts with NHTF and prevents binding of NHTF to its DNA-binding sites. Transcriptional regulator probably involved in the response to nitrogen levels. Down-regulates its own expression as well as the expression of the downstream gene, glnD, which encodes the [Protein-PII] uridylyltransferase, a key enzyme in the nitrogen regulation system. Acts by binding to a specific palindromic DNA sequence (5'-TGTNANTNACA-3') in its 5'-untranslated region. The chain is Neisseria hypothetical transcription factor from Neisseria meningitidis serogroup B (strain ATCC BAA-335 / MC58).